Consider the following 131-residue polypeptide: Small ribosomal subunit protein uS8 (131 aa).

It belongs to the universal ribosomal protein uS8 family. As to quaternary structure, part of the 30S ribosomal subunit. Contacts proteins S5 and S12.

Its function is as follows. One of the primary rRNA binding proteins, it binds directly to 16S rRNA central domain where it helps coordinate assembly of the platform of the 30S subunit. In Campylobacter hominis (strain ATCC BAA-381 / DSM 21671 / CCUG 45161 / LMG 19568 / NCTC 13146 / CH001A), this protein is Small ribosomal subunit protein uS8.